The following is a 240-amino-acid chain: Large ribosomal subunit protein uL2 (240 aa).

The span at 1 to 10 (MGHRISTQSR) shows a compositional bias: polar residues. 2 disordered regions span residues 1–20 (MGHR…YRAP) and 204–240 (FGGG…GYRR).

This sequence belongs to the universal ribosomal protein uL2 family. As to quaternary structure, part of the 50S ribosomal subunit. Forms a bridge to the 30S subunit in the 70S ribosome.

Its function is as follows. One of the primary rRNA binding proteins. Required for association of the 30S and 50S subunits to form the 70S ribosome, for tRNA binding and peptide bond formation. It has been suggested to have peptidyltransferase activity; this is somewhat controversial. Makes several contacts with the 16S rRNA in the 70S ribosome. The chain is Large ribosomal subunit protein uL2 from Methanocorpusculum labreanum (strain ATCC 43576 / DSM 4855 / Z).